We begin with the raw amino-acid sequence, 416 residues long: Homogentisate 1,2-dioxygenase (416 aa).

The Proton acceptor role is filled by His275. His318 and Glu324 together coordinate Fe cation. Tyr333 and His354 together coordinate homogentisate. Position 354 (His354) interacts with Fe cation.

Belongs to the homogentisate dioxygenase family. As to quaternary structure, hexamer; dimer of trimers. Requires Fe cation as cofactor.

It carries out the reaction homogentisate + O2 = 4-maleylacetoacetate + H(+). The protein operates within amino-acid degradation; L-phenylalanine degradation; acetoacetate and fumarate from L-phenylalanine: step 4/6. Functionally, involved in the catabolism of homogentisate (2,5-dihydroxyphenylacetate or 2,5-OH-PhAc), a central intermediate in the degradation of phenylalanine and tyrosine. Catalyzes the oxidative ring cleavage of the aromatic ring of homogentisate to yield maleylacetoacetate. In Legionella pneumophila (strain Lens), this protein is Homogentisate 1,2-dioxygenase.